We begin with the raw amino-acid sequence, 216 residues long: Probable nicotinate-nucleotide adenylyltransferase (216 aa).

This sequence belongs to the NadD family.

It carries out the reaction nicotinate beta-D-ribonucleotide + ATP + H(+) = deamido-NAD(+) + diphosphate. It functions in the pathway cofactor biosynthesis; NAD(+) biosynthesis; deamido-NAD(+) from nicotinate D-ribonucleotide: step 1/1. Its function is as follows. Catalyzes the reversible adenylation of nicotinate mononucleotide (NaMN) to nicotinic acid adenine dinucleotide (NaAD). The sequence is that of Probable nicotinate-nucleotide adenylyltransferase from Marinobacter nauticus (strain ATCC 700491 / DSM 11845 / VT8) (Marinobacter aquaeolei).